We begin with the raw amino-acid sequence, 270 residues long: tRNA pseudouridine synthase A (270 aa).

The active-site Nucleophile is D51. Y109 serves as a coordination point for substrate.

It belongs to the tRNA pseudouridine synthase TruA family. As to quaternary structure, homodimer.

The enzyme catalyses uridine(38/39/40) in tRNA = pseudouridine(38/39/40) in tRNA. Its function is as follows. Formation of pseudouridine at positions 38, 39 and 40 in the anticodon stem and loop of transfer RNAs. This Burkholderia thailandensis (strain ATCC 700388 / DSM 13276 / CCUG 48851 / CIP 106301 / E264) protein is tRNA pseudouridine synthase A.